The primary structure comprises 554 residues: Phenylalanine--tRNA ligase beta subunit (554 aa).

The 76-residue stretch at 276–351 (LSLKSRMISV…INYGYEKFEG (76 aa)) folds into the B5 domain. Mg(2+) is bound by residues aspartate 329, aspartate 335, glutamate 338, and glutamate 339.

This sequence belongs to the phenylalanyl-tRNA synthetase beta subunit family. Type 2 subfamily. In terms of assembly, tetramer of two alpha and two beta subunits. Mg(2+) is required as a cofactor.

It is found in the cytoplasm. It catalyses the reaction tRNA(Phe) + L-phenylalanine + ATP = L-phenylalanyl-tRNA(Phe) + AMP + diphosphate + H(+). The polypeptide is Phenylalanine--tRNA ligase beta subunit (Methanococcus maripaludis (strain C5 / ATCC BAA-1333)).